We begin with the raw amino-acid sequence, 434 residues long: Pre-B-cell leukemia transcription factor 3 (434 aa).

The segment at S20–G41 is disordered. A compositionally biased stretch (basic and acidic residues) spans H32–G41. The PBC domain occupies G41–D234. The PBC-A stretch occupies residues D48–G127. Residues A130–D234 form a PBC-B region. Positions A235–I297 form a DNA-binding region, homeobox; TALE-type. Low complexity predominate over residues N326–S341. 2 disordered regions span residues N326–D349 and A405–N434. Polar residues predominate over residues A405–T422.

The protein belongs to the TALE/PBX homeobox family. As to quaternary structure, interacts with PBXIP1.

The protein resides in the nucleus. Functionally, transcriptional activator that binds the sequence 5'-ATCAATCAA-3'. The sequence is that of Pre-B-cell leukemia transcription factor 3 (Pbx3) from Mus musculus (Mouse).